The chain runs to 1031 residues: Caprin-2 (1031 aa).

5 disordered regions span residues 1-27 (MKSA…QSTL), 364-458 (LQEE…SWEN), 500-520 (PKDV…LPKD), 605-658 (DQAS…SSEA), and 830-876 (RSGT…SMTP). Composition is skewed to polar residues over residues 425–439 (VSVQ…SWTT) and 446–458 (ASVQ…SWEN). Positions 608–646 (SSGSETEFTTSETPEMVVSPCKPKPASALASPNPPLSKS) are enriched in low complexity. A compositionally biased stretch (polar residues) spans 830–853 (RSGTSSGLQANSRAGWSDSSQVSS). Residues Ser852 and Ser853 each carry the phosphoserine modification. The C1q domain maps to 897–1031 (PQQMRVAFSA…TFSGYLLYQD (135 aa)). Residues Asp982 and Glu988 each contribute to the Ca(2+) site.

The protein belongs to the caprin family. Homotrimer; via C1q domain. Found in a complex with LRP6, CCNY and CDK14 during G2/M stage; CAPRIN2 functions as a scaffold for the complex by binding to CCNY via its N terminus and to CDK14 via its C terminus. Interacts with LRP5. Interacts with LRP6. In terms of tissue distribution, specifically expressed in brain (at protein level).

The protein localises to the cytoplasm. Its subcellular location is the cell membrane. Its function is as follows. Promotes phosphorylation of the Wnt coreceptor LRP6, leading to increased activity of the canonical Wnt signaling pathway. Facilitates constitutive LRP6 phosphorylation by CDK14/CCNY during G2/M stage of the cell cycle, which may potentiate cells for Wnt signaling. May regulate the transport and translation of mRNAs, modulating for instance the expression of proteins involved in synaptic plasticity in neurons. Involved in regulation of growth as erythroblasts shift from a highly proliferative state towards their terminal phase of differentiation. May be involved in apoptosis. This Mus musculus (Mouse) protein is Caprin-2.